We begin with the raw amino-acid sequence, 137 residues long: Small ribosomal subunit protein bS6 (137 aa).

This sequence belongs to the bacterial ribosomal protein bS6 family.

Its function is as follows. Binds together with bS18 to 16S ribosomal RNA. The protein is Small ribosomal subunit protein bS6 of Mycoplasma mycoides subsp. mycoides SC (strain CCUG 32753 / NCTC 10114 / PG1).